We begin with the raw amino-acid sequence, 410 residues long: 26S proteasome non-ATPase regulatory subunit 6 (410 aa).

The region spanning Asp-207–Ser-382 is the PCI domain.

It belongs to the proteasome subunit S10 family. Expressed in multiple tissues including the intestine, pharynx and hypodermis.

Acts as a regulatory subunit of the 26S proteasome which is involved in the ATP-dependent degradation of ubiquitinated proteins. The polypeptide is 26S proteasome non-ATPase regulatory subunit 6 (rpn-7) (Caenorhabditis elegans).